The following is a 905-amino-acid chain: DNA gyrase subunit A (905 aa).

The 490-residue stretch at 35-524 folds into the Topo IIA-type catalytic domain; the sequence is IPDVRDGLKP…GEFDQDIEDL (490 aa). Tyr-123 functions as the O-(5'-phospho-DNA)-tyrosine intermediate in the catalytic mechanism. The GyrA-box motif lies at 551-557; the sequence is QKRGGKG.

The protein belongs to the type II topoisomerase GyrA/ParC subunit family. As to quaternary structure, heterotetramer, composed of two GyrA and two GyrB chains. In the heterotetramer, GyrA contains the active site tyrosine that forms a transient covalent intermediate with DNA, while GyrB binds cofactors and catalyzes ATP hydrolysis.

Its subcellular location is the cytoplasm. The enzyme catalyses ATP-dependent breakage, passage and rejoining of double-stranded DNA.. In terms of biological role, a type II topoisomerase that negatively supercoils closed circular double-stranded (ds) DNA in an ATP-dependent manner to modulate DNA topology and maintain chromosomes in an underwound state. Negative supercoiling favors strand separation, and DNA replication, transcription, recombination and repair, all of which involve strand separation. Also able to catalyze the interconversion of other topological isomers of dsDNA rings, including catenanes and knotted rings. Type II topoisomerases break and join 2 DNA strands simultaneously in an ATP-dependent manner. The sequence is that of DNA gyrase subunit A from Rickettsia typhi (strain ATCC VR-144 / Wilmington).